The chain runs to 59 residues: Large ribosomal subunit protein uL30 (59 aa).

It belongs to the universal ribosomal protein uL30 family. As to quaternary structure, part of the 50S ribosomal subunit.

The sequence is that of Large ribosomal subunit protein uL30 from Sulfurihydrogenibium sp. (strain YO3AOP1).